A 955-amino-acid chain; its full sequence is Anoctamin-4 (955 aa).

Over 1 to 352 the chain is Extracellular; sequence MEASSSGITN…FGEKIGLYFA (352 aa). Positions 72 to 100 are disordered; sequence CKDDDSLLHPGNLTSTSDDASRLEAGGET. N-linked (GlcNAc...) asparagine glycans are attached at residues Asn83, Asn105, Asn257, and Asn288. The chain crosses the membrane as a helical span at residues 353–373; sequence WLGWYTGMLFPAAFIGLFVFL. The Cytoplasmic segment spans residues 374–424; sequence YGVTTLDHSQVSKEVCQATDIIMCPVCDKYCPFMRLSDSCVYAKVTHLFDN. Residues 425-445 traverse the membrane as a helical segment; sequence GATVFFAVFMAVWATVFLEFW. Residues 446-505 lie on the Extracellular side of the membrane; it reads KRRRAVIAYDWDLIDWEEEEEEIRPQFEAKYSKKERMNPISGKPEPYQAFTDKCSRLIVS. The chain crosses the membrane as a helical span at residues 506–526; that stretch reads ASGIFFMICVVIAAVFGIVIY. The Cytoplasmic portion of the chain corresponds to 527–547; it reads RVVTVSTFAAFKWALIRNNSQ. A helical membrane pass occupies residues 548–568; sequence VATTGTAVCINFCIIMLLNVL. Topologically, residues 569–595 are extracellular; the sequence is YEKVALLLTNLEQPRTESEWENSFTLK. Residues 596-616 traverse the membrane as a helical segment; it reads MFLFQFVNLNSSTFYIAFFLG. At 617–715 the chain is on the cytoplasmic side; the sequence is RFTGHPGAYL…AYGLFDEYLE (99 aa). Residues 716 to 736 form a helical membrane-spanning segment; the sequence is MILQFGFTTIFVAAFPLAPLL. Over 737-768 the chain is Extracellular; the sequence is ALLNNIIEIRLDAYKFVTQWRRPLASRAKDIG. A helical membrane pass occupies residues 769–789; it reads IWYGILEGIGILSVITNAFVI. Topologically, residues 790–885 are cytoplasmic; the sequence is AITSDFIPRL…QFWHVLAARL (96 aa). Residues 886 to 906 form a helical membrane-spanning segment; the sequence is AFIIVFEHLVFCIKHLISYLI. The Extracellular portion of the chain corresponds to 907–955; sequence PDLPKDLRDRMRREKYLIQEMMYEAELERLQKERKERKKNGKAHHNEWP.

The protein belongs to the anoctamin family.

It localises to the cell membrane. It catalyses the reaction a 1,2-diacyl-sn-glycero-3-phospho-L-serine(in) = a 1,2-diacyl-sn-glycero-3-phospho-L-serine(out). The enzyme catalyses a beta-D-galactosyl-(1&lt;-&gt;1')-N-acylsphing-4-enine(out) = a beta-D-galactosyl-(1&lt;-&gt;1')-N-acylsphing-4-enine(in). The catalysed reaction is a 1,2-diacyl-sn-glycero-3-phosphocholine(in) = a 1,2-diacyl-sn-glycero-3-phosphocholine(out). Its function is as follows. Has calcium-dependent phospholipid scramblase activity; scrambles phosphatidylserine, phosphatidylcholine and galactosylceramide. Does not exhibit calcium-activated chloride channel (CaCC) activity. The chain is Anoctamin-4 (ANO4) from Homo sapiens (Human).